Here is a 348-residue protein sequence, read N- to C-terminus: Actin maturation protease (348 aa).

The segment covering 1–18 (MISPCSPPLEPPVPPPET) has biased composition (pro residues). Residues 1 to 64 (MISPCSPPLE…LPPPPRTTGF (64 aa)) form a disordered region. Residues 34–48 (NLPELAFPPSSFQAS) are compositionally biased toward low complexity. The span at 49-60 (VPPPPPLPPPPR) shows a compositional bias: pro residues. The segment at 121 to 241 (SLIQEGPQCG…WAVSAGVLLG (121 aa)) is peptidase C39-like. Cys129 is an active-site residue. Position 313 is a phosphoserine (Ser313).

Belongs to the ACTMAP family. Interacts (via N-terminus) with PFN2; the interaction may facilitate efficient cleavage of the acetylated N-terminus of immature actin. Interacts with PFN1.

The protein resides in the cytoplasm. The catalysed reaction is N-terminal N(alpha)-acetyl-L-methionyl-L-aspartyl-[protein] + H2O = N-terminal L-aspartyl-[protein] + N-acetyl-L-methionine. It catalyses the reaction N-terminal N(alpha)-acetyl-L-methionyl-L-glutamyl-[protein] + H2O = N-terminal L-glutamyl-[protein] + N-acetyl-L-methionine. The enzyme catalyses N-terminal N(alpha)-acetyl-L-cysteinyl-L-aspartyl-[protein] + H2O = N-terminal L-aspartyl-[protein] + N-acetyl-L-cysteine. It carries out the reaction N-terminal N(alpha)-acetyl-L-cysteinyl-L-glutamyl-[protein] + H2O = N-terminal L-glutamyl-[protein] + N-acetyl-L-cysteine. Functionally, actin maturation protease that specifically mediates the cleavage of immature acetylated N-terminal actin, thereby contributing to actin maturation. Cleaves N-terminal acetylated methionine of immature cytoplasmic beta- and gamma-actins ACTB and ACTG1 after translation. Cleaves N-terminal acetylated cysteine of muscle alpha-actins ACTA1, ACTC1 and ACTA2 after canonical removal of N-terminal methionine. This Bos taurus (Bovine) protein is Actin maturation protease.